Reading from the N-terminus, the 299-residue chain is 4-sulfomuconolactone hydrolase (299 aa).

Belongs to the metallo-dependent hydrolases superfamily. Sulfomuconolactone hydrolase family. Monomer. Zn(2+) is required as a cofactor.

The catalysed reaction is 4-sulfomuconolactone + H2O = maleylacetate + sulfite + 2 H(+). Its function is as follows. Involved in the degradation of 4-sulfocatechol which is a central intermediate in the degradation of substituted sulfonated benzenes. Catalyzes the hydrolytical desulfonation of 4-sulfomuconolactone to yield maleylacetate. The sequence is that of 4-sulfomuconolactone hydrolase from Rhizobium radiobacter (Agrobacterium tumefaciens).